A 115-amino-acid chain; its full sequence is Con-Ins T2 (115 aa).

The N-terminal stretch at 1-21 (MTTSFYFLLVALGLLLYVCQS) is a signal peptide. The propeptide occupies 22–29 (SFGNQHTR). 3 cysteine pairs are disulfide-bonded: C38–C101, C50–C114, and C100–C105. At E48 the chain carries 4-carboxyglutamate. Positions 53–94 (KRNDAGKKRGQASPLWQRGGSLSMLKARAKRNEAFHLQRAHR) are cleaved as a propeptide — c peptide. The residue at position 98 (E98) is a 4-carboxyglutamate. Residue E109 is modified to 4-carboxyglutamate. The residue at position 114 (C114) is a Cysteine amide.

It belongs to the insulin family. Heterodimer of A and B chains; disulfide-linked. In terms of tissue distribution, expressed by the venom gland.

The protein resides in the secreted. This venom insulin facilitates prey capture by rapidly inducing hypoglycemic shock. It is one of the smallest known insulin found in nature and lacks the C-terminal segment of the B chain that, in human insulin, mediates engagement of the insulin receptor (INSR) and assembly of the hormone's hexameric storage form. Despite lacking this segment, it both binds and activates human insulin receptor (long isoform (HIR-B)) with a high potency (EC(50)=15.5 nM). In vivo, intraperitoneal injection of this peptide into zebrafish lowers blood glucose with a lower potency than human insulin. In addition, when applied to water, this peptide reduces overall locomotor activity of zebrafish larvae, observed as a significant decrease in the percentage of time spent swimming and movement frequency. When tested on a mouse model of diabetes, this insulin also lowers blood glucose with a 10-fold lower potency than human insulin. This chain is Con-Ins T2, found in Conus tulipa (Fish-hunting cone snail).